The sequence spans 358 residues: Sulfoquinovosyl glycerol transport ATP-binding protein SmoE (358 aa).

An ABC transporter domain is found at 4–234 (VSLRKLDKSY…PESVFVGGFV (231 aa)). 36–43 (GPSGCGKS) contacts ATP.

This sequence belongs to the ABC transporter superfamily. As to quaternary structure, the complex is probably composed of two ATP-binding proteins (SmoE), two transmembrane proteins (SmoG and SmoH) and a solute-binding protein (SmoF).

Its subcellular location is the cell inner membrane. Part of the ABC transporter complex SmoEFGH involved in sulfoquinovosyl glycerol (SQGro) uptake. Responsible for energy coupling to the transport system. The protein is Sulfoquinovosyl glycerol transport ATP-binding protein SmoE of Agrobacterium fabrum (strain C58 / ATCC 33970) (Agrobacterium tumefaciens (strain C58)).